The chain runs to 310 residues: tRNA-5-methyluridine(54) 2-sulfurtransferase (310 aa).

Residues C3, C6, C22, and H25 each coordinate Zn(2+). Residues A53 and I79 each contribute to the ATP site. Positions 128 and 131 each coordinate [4Fe-4S] cluster. C128 and C220 are disulfide-bonded. K135 and G154 together coordinate ATP. Residue C220 coordinates [4Fe-4S] cluster. Zn(2+) is bound by residues C272, C275, C284, and C287.

This sequence belongs to the TtcA family. TtuA subfamily. Homodimer. [4Fe-4S] cluster serves as cofactor. It depends on Mg(2+) as a cofactor.

The enzyme catalyses 5-methyluridine(54) in tRNA + hydrogen sulfide + ATP = 5-methyl-2-thiouridine(54) in tRNA + AMP + diphosphate. Its pathway is tRNA modification. Catalyzes the ATP-dependent 2-thiolation of 5-methyluridine residue at position 54 in the T loop of tRNAs, leading to 5-methyl-2-thiouridine (m(5)s(2)U or s(2)T). This modification allows thermal stabilization of tRNAs in thermophilic microorganisms, and is required for cell growth at high temperatures. Can use free sulfide as sulfur source in vitro, which may be also the sulfur source in vivo. The polypeptide is tRNA-5-methyluridine(54) 2-sulfurtransferase (Pyrococcus horikoshii (strain ATCC 700860 / DSM 12428 / JCM 9974 / NBRC 100139 / OT-3)).